Consider the following 444-residue polypeptide: Sprouty-related, EVH1 domain-containing protein 1 (444 aa).

At serine 2 the chain carries N-acetylserine. A WH1 domain is found at 6–123 (ATSDNDNSYA…RGIRRAIEDI (118 aa)). The disordered stretch occupies residues 123–151 (ISQGCPESKNEAEGADDLQANEEDSSSSL). Positions 135–147 (EGADDLQANEEDS) are enriched in acidic residues. At lysine 224 the chain carries N6-methyllysine. Residues 233 to 285 (SIRHVSFQDEDEIVRINPRDILIRRYADYRHPDMWKNDLERDDADSSIQFSKP) form the KBD domain. 2 positions are modified to phosphoserine: serine 238 and serine 308. The tract at residues 333–444 (SRCVYCQERF…CCGGKHKAAG (112 aa)) is required for interaction with TESK1. The SPR domain occupies 334 to 442 (RCVYCQERFN…CGCCGGKHKA (109 aa)).

In terms of assembly, homodimer and heterodimer. Able to interact with SPRED2 to form heterodimers. Interacts (via C-terminus) with TAOK1/MARKK (via C-terminus); the interaction does not affect TAOK1 kinase activity. Interacts (via C-terminus) with TESK1 (via C-terminus); the interaction inhibits TESK1 kinase activity. Interacts with CAV1. Interacts with RAS. Interacts with palmitoyltransferase ZDHHC17/HIP14; the interaction leads to palmitoylation of SPRED1. Palmitoylated by ZDHHC17/HIP14. Post-translationally, phosphorylated on tyrosine. In terms of processing, ubiquitinated. As to expression, weakly expressed in embryonic cell line HEK293.

The protein resides in the cell membrane. Its subcellular location is the membrane. It is found in the caveola. It localises to the nucleus. In terms of biological role, tyrosine kinase substrate that inhibits growth-factor-mediated activation of MAP kinase. Negatively regulates hematopoiesis of bone marrow. Inhibits fibroblast growth factor (FGF)-induced retinal lens fiber differentiation, probably by inhibiting FGF-mediated phosphorylation of ERK1/2. Attenuates actin stress fiber formation via inhibition of TESK1-mediated phosphorylation of cofilin. Inhibits TGFB-induced epithelial-to-mesenchymal transition in lens epithelial cells. The polypeptide is Sprouty-related, EVH1 domain-containing protein 1 (SPRED1) (Homo sapiens (Human)).